A 172-amino-acid chain; its full sequence is Translation initiation factor IF-3 (172 aa).

Belongs to the IF-3 family. As to quaternary structure, monomer.

The protein localises to the cytoplasm. IF-3 binds to the 30S ribosomal subunit and shifts the equilibrium between 70S ribosomes and their 50S and 30S subunits in favor of the free subunits, thus enhancing the availability of 30S subunits on which protein synthesis initiation begins. The polypeptide is Translation initiation factor IF-3 (Oceanobacillus iheyensis (strain DSM 14371 / CIP 107618 / JCM 11309 / KCTC 3954 / HTE831)).